Reading from the N-terminus, the 182-residue chain is MKEVINSLNYLSNWPSAGSFEFNTNILETNIINISVVLGVLVYFGKGVLSNLLDNRKSKILNTIQNSEELCKGATDQLEKARARLWEVEKRVDEIRVNGYLQIEQEKENLIKAASANLKQLEDSKNETIFFEQQKVIDQVRQQISYQALQKALAIMNNCLNTDLHLRMIDYNIGRLRAKKPN.

A helical transmembrane segment spans residues 31 to 53; sequence IINISVVLGVLVYFGKGVLSNLL.

The protein belongs to the ATPase B chain family. As to quaternary structure, F-type ATPases have 2 components, F(1) - the catalytic core - and F(0) - the membrane proton channel. F(1) has five subunits: alpha(3), beta(3), gamma(1), delta(1), epsilon(1). F(0) has four main subunits: a(1), b(1), b'(1) and c(10-14). The alpha and beta chains form an alternating ring which encloses part of the gamma chain. F(1) is attached to F(0) by a central stalk formed by the gamma and epsilon chains, while a peripheral stalk is formed by the delta, b and b' chains.

It localises to the plastid. It is found in the chloroplast thylakoid membrane. F(1)F(0) ATP synthase produces ATP from ADP in the presence of a proton or sodium gradient. F-type ATPases consist of two structural domains, F(1) containing the extramembraneous catalytic core and F(0) containing the membrane proton channel, linked together by a central stalk and a peripheral stalk. During catalysis, ATP synthesis in the catalytic domain of F(1) is coupled via a rotary mechanism of the central stalk subunits to proton translocation. Functionally, component of the F(0) channel, it forms part of the peripheral stalk, linking F(1) to F(0). In Welwitschia mirabilis (Tree tumbo), this protein is ATP synthase subunit b, chloroplastic.